The following is a 250-amino-acid chain: MKGFLKPNFSLGALFLTLSPIATACIAEKPVNNRFNFNSEQLARLRKARVNHWRDGDTLEVSFANNHQKPIRIYAIDTPEKAVLSIQRKSEIELKEANKATEFAKSLIPIGSEVWIWPLNSYSYDREVAAVFFKTNPLQLHFESFAVEMVANGHALPIAGNDFDFVFSDLDPFNPLKIVGIELANGLNNAFNNRKNIFSYLENSFQSITMVYQQRGVDQSWTRYLAPSNDFSSTKLGLGLTIYELKLNNG.

A signal peptide spans 1–24 (MKGFLKPNFSLGALFLTLSPIATA). Cys-25 is lipidated: N-palmitoyl cysteine. Cys-25 is lipidated: S-diacylglycerol cysteine. Positions 44-200 (RLRKARVNHW…FNNRKNIFSY (157 aa)) constitute a TNase-like domain.

Its subcellular location is the cell membrane. This is an uncharacterized protein from Mycoplasma genitalium (strain ATCC 33530 / DSM 19775 / NCTC 10195 / G37) (Mycoplasmoides genitalium).